The following is a 376-amino-acid chain: Glucose-1-phosphate adenylyltransferase (376 aa).

Alpha-D-glucose 1-phosphate is bound by residues Tyr101, Gly166, 181 to 182 (EK), and Ser192.

The protein belongs to the bacterial/plant glucose-1-phosphate adenylyltransferase family. In terms of assembly, homotetramer.

It catalyses the reaction alpha-D-glucose 1-phosphate + ATP + H(+) = ADP-alpha-D-glucose + diphosphate. It functions in the pathway glycan biosynthesis; glycogen biosynthesis. Involved in the biosynthesis of ADP-glucose, a building block required for the elongation reactions to produce glycogen. Catalyzes the reaction between ATP and alpha-D-glucose 1-phosphate (G1P) to produce pyrophosphate and ADP-Glc. The protein is Glucose-1-phosphate adenylyltransferase of Bacillus cereus (strain Q1).